The sequence spans 396 residues: Actin-related protein 6 (396 aa).

At threonine 2 the chain carries N-acetylthreonine. Lysine 260 bears the N6-acetyllysine mark.

It belongs to the actin family. ARP6 subfamily. In terms of assembly, component of the chromatin-remodeling SRCAP complex composed of at least SRCAP, DMAP1, RUVBL1, RUVBL2, ACTL6A, YEATS4, ACTR6 and ZNHIT1. Interacts with CBX1, CBX3 and CBX5.

The protein localises to the cytoplasm. Its subcellular location is the cytoskeleton. It is found in the nucleus. The protein resides in the nucleolus. Functionally, required for formation and/or maintenance of proper nucleolar structure and function. Plays a dual role in the regulation of ribosomal DNA (rDNA) transcription. In the presence of high glucose, maintains active rDNA transcription through H2A.Z deposition and under glucose starvation, is required for the repression of rDNA transcription, and this function may be independent of H2A.Z. This Homo sapiens (Human) protein is Actin-related protein 6 (ACTR6).